Reading from the N-terminus, the 354-residue chain is Phenylalanine 4-monooxygenase, chloroplastic (354 aa).

The N-terminal 60 residues, 1–60 (MAFPLQKTFLCSNGQSFPCSNGRSTSTLLASDLKFQRLNKPFILRVGSMQIRNSPKEHPR), are a transit peptide targeting the chloroplast. Fe cation contacts are provided by His-229, His-234, and Glu-274.

This sequence belongs to the biopterin-dependent aromatic amino acid hydroxylase family. Forms monomers. Requires Fe(2+) as cofactor.

It localises to the plastid. It is found in the chloroplast. It carries out the reaction (6R)-L-erythro-5,6,7,8-tetrahydrobiopterin + L-phenylalanine + O2 = (4aS,6R)-4a-hydroxy-L-erythro-5,6,7,8-tetrahydrobiopterin + L-tyrosine. Catalyzes the hydroxylation of L-phenylalanine to L-tyrosine. Does not seem to be tetrahydropterin-dependent and shows preference for 10-formyltetrahydrofolate as cosubstrate and electron donor. The polypeptide is Phenylalanine 4-monooxygenase, chloroplastic (Pinus taeda (Loblolly pine)).